Consider the following 329-residue polypeptide: Malate dehydrogenase (329 aa).

NAD(+) is bound at residue 11–17 (GAAGQIA). 2 residues coordinate substrate: R92 and R98. NAD(+) is bound by residues N105, Q112, and 129-131 (VGN). N131 and R162 together coordinate substrate. Residue H187 is the Proton acceptor of the active site.

The protein belongs to the LDH/MDH superfamily. MDH type 2 family.

The enzyme catalyses (S)-malate + NAD(+) = oxaloacetate + NADH + H(+). Catalyzes the reversible oxidation of malate to oxaloacetate. This Akkermansia muciniphila (strain ATCC BAA-835 / DSM 22959 / JCM 33894 / BCRC 81048 / CCUG 64013 / CIP 107961 / Muc) protein is Malate dehydrogenase.